A 49-amino-acid polypeptide reads, in one-letter code: Large ribosomal subunit protein bL33 (49 aa).

The protein belongs to the bacterial ribosomal protein bL33 family.

The protein is Large ribosomal subunit protein bL33 of Lacticaseibacillus casei (strain BL23) (Lactobacillus casei).